Reading from the N-terminus, the 4249-residue chain is Fibrocystin-L (4249 aa).

Positions 1-20 (MGHLWLSGTWFLFGLLWCAA) are cleaved as a signal peptide. At 21–4222 (DSHKGSSETI…TPVQTLAVIT (4202 aa)) the chain is on the extracellular side. IPT/TIG domains follow at residues 31-132 (PKVT…GVAS), 146-255 (PTIR…KMTY), 270-361 (PEVV…ILEY), 1067-1153 (PLIL…HFIY), 1155-1234 (SQIS…SFSY), 1240-1323 (PVVT…KLNA), 1329-1468 (LEVI…SFSY), 1565-1648 (PSII…TLTK), 1658-1742 (PNID…SFSY), 1748-1827 (PYVT…NLTI), 1830-1909 (PAVA…SFTY), 1915-1996 (PFLK…AFEY), 1998-2084 (LSIQ…LFTY), and 2090-2175 (PLIT…DFLY). In terms of domain architecture, PA14 spans 337 to 492 (PGGRGLKVEV…NVFTEQQTGD (156 aa)). O-linked (GalNAc...) threonine glycans are attached at residues T1297 and T1359. T1838 is a glycosylation site (O-linked (GalNAc...) threonine). The G8 1 domain maps to 2183–2303 (SSWGGSPPPE…IPVVWTRLTH (121 aa)). PbH1 repeat units lie at residues 2484 to 2506 (QFKS…TIHN), 2507 to 2529 (THHL…FIED), 2565 to 2587 (NPNN…WYRM), 2664 to 2686 (GGAL…ETKR), and 2732 to 2755 (SQGL…ALGV). The region spanning 3035-3173 (SFWQSSPENN…HSVYKTKLLE (139 aa)) is the G8 2 domain. PbH1 repeat units follow at residues 3292–3314 (KGNA…RDST), 3354–3376 (TDGV…RIWG), 3415–3437 (GTNT…RIDG), 3470–3492 (PGCS…YFQT), and 3493–3514 (TESV…FSMV). A glycan (O-linked (GalNAc...) threonine) is linked at T3735. Residues 4183–4208 (LSAQSVPGGSGSSPGSGSSSSGHSKA) form a disordered region. Positions 4197–4208 (GSGSSSSGHSKA) are enriched in low complexity. The chain crosses the membrane as a helical span at residues 4223–4243 (ACLVGRLLLLEVFMAAVFILN). At 4244 to 4249 (TTVGIN) the chain is on the cytoplasmic side.

In terms of tissue distribution, expressed in neurons in the hippocampus and the cerebral cortex (at protein level). Transiently expressed at high levels in inner ear hair cells, predominantly in outer hair cells, during early postnatal development (at protein level).

It is found in the membrane. Its subcellular location is the cell projection. The protein resides in the stereocilium membrane. In terms of biological role, component of hair-cell stereocilia coat. Required for normal hearing. The chain is Fibrocystin-L (Pkhd1l1) from Mus musculus (Mouse).